Here is a 153-residue protein sequence, read N- to C-terminus: Ribosome maturation factor RimP (153 aa).

The protein belongs to the RimP family.

It is found in the cytoplasm. Functionally, required for maturation of 30S ribosomal subunits. In Clostridium tetani (strain Massachusetts / E88), this protein is Ribosome maturation factor RimP.